The primary structure comprises 284 residues: Nucleotide-binding protein NMA0948 (284 aa).

8 to 15 is an ATP binding site; it reads GLSGSGKS. 58–61 is a GTP binding site; that stretch reads DVRS.

Belongs to the RapZ-like family.

Displays ATPase and GTPase activities. The sequence is that of Nucleotide-binding protein NMA0948 from Neisseria meningitidis serogroup A / serotype 4A (strain DSM 15465 / Z2491).